Consider the following 243-residue polypeptide: Type II restriction enzyme NlaIV (243 aa).

It catalyses the reaction Endonucleolytic cleavage of DNA to give specific double-stranded fragments with terminal 5'-phosphates.. Functionally, a P subtype restriction enzyme that recognizes the double-stranded sequence 5'-GGNNCC-3' and cleaves after N-3. This chain is Type II restriction enzyme NlaIV (nlaIVR), found in Neisseria lactamica.